We begin with the raw amino-acid sequence, 339 residues long: MRINLNFHYDKLHLKEIIILIPKYHTNMVSFLTPILGLYGINVKEFINDFEIKTRFINFDVIVPTLVKISKIKTFEIILKTPYVISILSNLNNFSVTKPNIDLLSVYKISLLKSVFHSNFLDVFHRRIYLSLRKYLSLVIKVNFHLSVSSALAKKSLSNLNNLLLLKFNIQNNILFAKLLNNRYGLFVSFNNSSASNLNYLKTVLAIQNISIFKAKSNLLSSLTGNKYFFGNIYFIGATSLKYFIGFLKEVSLKSFGSNFFPIFFKIRSNLVSQPFVKLFLSVFNSQVKLINFYALRVIYTIFIKIFKNLNFLNKKLTFLLNRNNSNSNANISSNIKES.

Belongs to the universal ribosomal protein uL11 family.

The protein resides in the mitochondrion. In Acanthamoeba castellanii (Amoeba), this protein is Large ribosomal subunit protein uL11m (RPL11).